Here is a 324-residue protein sequence, read N- to C-terminus: Beta-ketoacyl-[acyl-carrier-protein] synthase III (324 aa).

Residues C112 and H249 contribute to the active site. Positions 250–254 (QANRR) are ACP-binding. N279 is a catalytic residue.

The protein belongs to the thiolase-like superfamily. FabH family. Homodimer.

It is found in the cytoplasm. The enzyme catalyses malonyl-[ACP] + acetyl-CoA + H(+) = 3-oxobutanoyl-[ACP] + CO2 + CoA. The protein operates within lipid metabolism; fatty acid biosynthesis. Its function is as follows. Catalyzes the condensation reaction of fatty acid synthesis by the addition to an acyl acceptor of two carbons from malonyl-ACP. Catalyzes the first condensation reaction which initiates fatty acid synthesis and may therefore play a role in governing the total rate of fatty acid production. Possesses both acetoacetyl-ACP synthase and acetyl transacylase activities. Its substrate specificity determines the biosynthesis of branched-chain and/or straight-chain of fatty acids. In Streptococcus equi subsp. zooepidemicus (strain H70), this protein is Beta-ketoacyl-[acyl-carrier-protein] synthase III.